A 150-amino-acid chain; its full sequence is UPF0336 protein SAV_4901 (150 aa).

The MaoC-like domain maps to 8–126 (VGRSYPPTDP…GNDVVDVRGE (119 aa)).

It belongs to the UPF0336 family.

The sequence is that of UPF0336 protein SAV_4901 from Streptomyces avermitilis (strain ATCC 31267 / DSM 46492 / JCM 5070 / NBRC 14893 / NCIMB 12804 / NRRL 8165 / MA-4680).